The following is a 211-amino-acid chain: LexA repressor (211 aa).

A DNA-binding region (H-T-H motif) is located at residues 27–47 (QTEIARAFGFKGVRAVQHHLD). Active-site for autocatalytic cleavage activity residues include Ser131 and Lys168.

Belongs to the peptidase S24 family. In terms of assembly, homodimer.

It catalyses the reaction Hydrolysis of Ala-|-Gly bond in repressor LexA.. Represses a number of genes involved in the response to DNA damage (SOS response), including recA and lexA. In the presence of single-stranded DNA, RecA interacts with LexA causing an autocatalytic cleavage which disrupts the DNA-binding part of LexA, leading to derepression of the SOS regulon and eventually DNA repair. In Xylella fastidiosa (strain M12), this protein is LexA repressor.